The chain runs to 571 residues: Proline--tRNA ligase (571 aa).

This sequence belongs to the class-II aminoacyl-tRNA synthetase family. ProS type 1 subfamily. As to quaternary structure, homodimer.

It localises to the cytoplasm. It carries out the reaction tRNA(Pro) + L-proline + ATP = L-prolyl-tRNA(Pro) + AMP + diphosphate. In terms of biological role, catalyzes the attachment of proline to tRNA(Pro) in a two-step reaction: proline is first activated by ATP to form Pro-AMP and then transferred to the acceptor end of tRNA(Pro). As ProRS can inadvertently accommodate and process non-cognate amino acids such as alanine and cysteine, to avoid such errors it has two additional distinct editing activities against alanine. One activity is designated as 'pretransfer' editing and involves the tRNA(Pro)-independent hydrolysis of activated Ala-AMP. The other activity is designated 'posttransfer' editing and involves deacylation of mischarged Ala-tRNA(Pro). The misacylated Cys-tRNA(Pro) is not edited by ProRS. The chain is Proline--tRNA ligase from Syntrophotalea carbinolica (strain DSM 2380 / NBRC 103641 / GraBd1) (Pelobacter carbinolicus).